Reading from the N-terminus, the 545-residue chain is MAAKDVKFGNDARVKMLRGVNVLADAVKVTLGPKGRNVVLDKSFGAPTITKDGVSVAREIELEDKFENMGAQMVKEVASKANDAAGDGTTTATVLAQSIITEGLKAVAAGMNPMDLKRGIDKAVAAAVEELKALSVPCSDSKAIAQVGTISANSDETVGKLIAEAMDKVGKEGVITVEDGTGLQDELDVVEGMQFDRGYLSPYFINKPETGAVELESPFILLADKKISNIREMLPVLEAVAKAGKPLLIIAEDVEGEALATLVVNTMRGIVKVAAVKAPGFGDRRKAMLQDIATLTGGTVISEEIGMELEKATLEDLGQAKRVVINKDTTTIIDGVGEEAAIQGRVAQIRQQIEEATSDYDREKLQERVAKLAGGVAVIKVGAATEVEMKEKKARVEDALHATRAAVEEGVVAGGGVALIRVASKIADLKGQNEDQNVGIKVALRAMEAPLRQIVLNCGEEPSVVANTVKGGDGNYGYNAATEEYGNMIDMGILDPTKVTRSALQYAASVAGLMITTECMVTDLPKSDAPDLGAAGGMGGMGGMM.

Residues 30-33, Lys51, 87-91, Gly415, 479-481, and Asp495 contribute to the ATP site; these read TLGP, DGTTT, and NAA.

This sequence belongs to the chaperonin (HSP60) family. In terms of assembly, forms a cylinder of 14 subunits composed of two heptameric rings stacked back-to-back. Interacts with the co-chaperonin GroES.

It is found in the cytoplasm. It carries out the reaction ATP + H2O + a folded polypeptide = ADP + phosphate + an unfolded polypeptide.. Its function is as follows. Together with its co-chaperonin GroES, plays an essential role in assisting protein folding. The GroEL-GroES system forms a nano-cage that allows encapsulation of the non-native substrate proteins and provides a physical environment optimized to promote and accelerate protein folding. The polypeptide is Chaperonin GroEL (Salmonella agona (strain SL483)).